Reading from the N-terminus, the 860-residue chain is Protein argonaute-3 (860 aa).

The PAZ domain maps to 230–349 (PVIQFMCEVL…LPLEVCNIVA (120 aa)). One can recognise a Piwi domain in the interval 518–819 (LIIVILPGKT…VAFRARYHLV (302 aa)). The interval 530–567 (YAEVKRAGDTLLGMATQCVQVKNVIKTSPQTLSNLCLK) is interaction with guide RNA. A divalent metal cation-binding residues include aspartate 598, glutamate 638, and aspartate 670. The interval 758 to 805 (QGTSRPSHYHVLWDDNCFTADELQLLTYQLCHTYVRCTRSVSIPAPAY) is interaction with guide RNA. Histidine 808 contacts a divalent metal cation.

This sequence belongs to the argonaute family. Ago subfamily.

The protein localises to the cytoplasm. It localises to the P-body. It catalyses the reaction Endonucleolytic cleavage to 5'-phosphomonoester.. Functionally, required for RNA-mediated gene silencing (RNAi). Binds to short RNAs such as microRNAs (miRNAs) and represses the translation of mRNAs which are complementary to them. Possesses RNA slicer activity but only on select RNAs bearing 5'- and 3'-flanking sequences to the region of guide-target complementarity. The sequence is that of Protein argonaute-3 (AGO3) from Gallus gallus (Chicken).